The following is a 103-amino-acid chain: Iron-sulfur cluster assembly protein CyaY (103 aa).

This sequence belongs to the frataxin family.

In terms of biological role, involved in iron-sulfur (Fe-S) cluster assembly. May act as a regulator of Fe-S biogenesis. This Rickettsia africae (strain ESF-5) protein is Iron-sulfur cluster assembly protein CyaY.